Reading from the N-terminus, the 822-residue chain is Outer dense fiber protein 2 (822 aa).

The interval 26-45 is disordered; the sequence is KGQKTTPAKCQQKHKQKMKG. Coiled-coil stretches lie at residues 113-418, 452-490, and 516-796; these read CKMN…EECA, DKSDLELEMVTVNSRIADLLEQQATLEDKMREDRDALMD, and MEEK…NYVQ.

The protein belongs to the ODF2 family. As to quaternary structure, self-associates. Associates with microtubules and forms a fibrillar structure partially linked to the microtubule network.

It localises to the cytoplasm. Its subcellular location is the cytoskeleton. It is found in the microtubule organizing center. The protein resides in the centrosome. The protein localises to the cell projection. It localises to the cilium. Its subcellular location is the centriole. It is found in the spindle pole. The protein resides in the flagellum. Its function is as follows. Seems to be a major component of sperm tail outer dense fibers (ODF). ODFs are filamentous structures located on the outside of the axoneme in the midpiece and principal piece of the mammalian sperm tail and may help to maintain the passive elastic structures and elastic recoil of the sperm tail. This is Outer dense fiber protein 2 (ODF2) from Gallus gallus (Chicken).